Consider the following 635-residue polypeptide: Thrombopoietin receptor (635 aa).

The N-terminal stretch at Met1–Ser25 is a signal peptide. Over Gln26–Trp491 the chain is Extracellular. Disulfide bonds link Cys40–Cys50 and Cys77–Cys93. N-linked (GlcNAc...) asparagine glycosylation is found at Asn117 and Asn178. The 110-residue stretch at Gly172–Pro281 folds into the Fibronectin type-III 1 domain. Cystine bridges form between Cys193-Cys323, Cys194-Cys241, Cys291-Cys301, and Cys334-Cys352. The tract at residues Ala205–Ser232 is disordered. An N-linked (GlcNAc...) asparagine glycan is attached at Asn298. Asn358 carries an N-linked (GlcNAc...) asparagine glycan. A Fibronectin type-III 2 domain is found at Pro392–Ala486. The short motif at Trp474–Ser478 is the WSXWS motif element. A helical transmembrane segment spans residues Ile492–Leu513. At Arg514–Pro635 the chain is on the cytoplasmic side. A Box 1 motif motif is present at residues Leu528 to His536. Glycyl lysine isopeptide (Lys-Gly) (interchain with G-Cter in ubiquitin) cross-links involve residues Lys553 and Lys573. Phosphotyrosine occurs at positions 591, 626, and 631.

Belongs to the type I cytokine receptor family. Type 1 subfamily. As to quaternary structure, homodimer. Interacts with ATXN2L. Interacts with JAK2 and TYK2; these interactions increase MPL localization to the cell membrane. Interacts with THPO. Interacts with SHIP/INPP5D. Interacts with BTK. Interacts with SYK; this interaction negatively regulates THPO-mediated ERK1/2 signaling. Post-translationally, phosphorylated at Tyr-591 in response to THPO stimulation. In terms of processing, ubiquitination at Lys-553 and Lys-573 targets MPL for degradation by both the lysosomal and proteasomal pathways. The E3 ubiquitin-protein ligase CBL significantly contributes to this ubiquitination. As to expression, expressed at a low level in a large number of cells of hematopoietic origin. Isoform 1 and isoform 2 are always found to be coexpressed.

It is found in the cell membrane. The protein localises to the golgi apparatus. It localises to the cell surface. Its function is as follows. Receptor for thrombopoietin that regulates hematopoietic stem cell renewal, megakaryocyte differentiation, and platelet formation. Upon activation by THPO, induces rapid tyrosine phosphorylation and activation of JAK2, providing docking sites for many signaling proteins such as STAT5, SHIP/INPP5D, GRB2, SOS1 and PI3K. In turn, These signaling cascades lead to the proliferation, survival, and differentiation of megakaryocytes, ultimately leading to increased platelet production. This Homo sapiens (Human) protein is Thrombopoietin receptor (MPL).